The sequence spans 485 residues: Probable phosphomannomutase (485 aa).

Ser86 acts as the Phosphoserine intermediate in catalysis. Positions 86, 236, 238, and 240 each coordinate Mg(2+).

Belongs to the phosphohexose mutase family. Mg(2+) is required as a cofactor.

It catalyses the reaction alpha-D-mannose 1-phosphate = D-mannose 6-phosphate. The protein is Probable phosphomannomutase of Haemophilus influenzae (strain ATCC 51907 / DSM 11121 / KW20 / Rd).